A 203-amino-acid polypeptide reads, in one-letter code: dITP/XTP pyrophosphatase (203 aa).

7–12 (TGNRDK) is a binding site for substrate. Catalysis depends on Asp73, which acts as the Proton acceptor. Asp73 lines the Mg(2+) pocket. Residues Ser74, 155–158 (FGYD), Lys178, and 183–184 (HR) each bind substrate.

The protein belongs to the HAM1 NTPase family. In terms of assembly, homodimer. It depends on Mg(2+) as a cofactor.

The enzyme catalyses XTP + H2O = XMP + diphosphate + H(+). It catalyses the reaction dITP + H2O = dIMP + diphosphate + H(+). The catalysed reaction is ITP + H2O = IMP + diphosphate + H(+). In terms of biological role, pyrophosphatase that catalyzes the hydrolysis of nucleoside triphosphates to their monophosphate derivatives, with a high preference for the non-canonical purine nucleotides XTP (xanthosine triphosphate), dITP (deoxyinosine triphosphate) and ITP. Seems to function as a house-cleaning enzyme that removes non-canonical purine nucleotides from the nucleotide pool, thus preventing their incorporation into DNA/RNA and avoiding chromosomal lesions. The sequence is that of dITP/XTP pyrophosphatase from Wolinella succinogenes (strain ATCC 29543 / DSM 1740 / CCUG 13145 / JCM 31913 / LMG 7466 / NCTC 11488 / FDC 602W) (Vibrio succinogenes).